A 55-amino-acid chain; its full sequence is Large ribosomal subunit protein bL33 (55 aa).

The protein belongs to the bacterial ribosomal protein bL33 family.

The chain is Large ribosomal subunit protein bL33 (rpmG) from Nitrobacter hamburgensis (strain DSM 10229 / NCIMB 13809 / X14).